Consider the following 366-residue polypeptide: Class I histocompatibility antigen, Gogo-C*0203 alpha chain (366 aa).

The N-terminal stretch at 1 to 24 is a signal peptide; it reads MRVMAPRTLILLLSGALALTETWA. The tract at residues 25–114 is alpha-1; that stretch reads GSHSMRYFYT…LRGYYNQSED (90 aa). Residues 25–308 lie on the Extracellular side of the membrane; sequence GSHSMRYFYT…EPSSQPTIPI (284 aa). N110 carries N-linked (GlcNAc...) asparagine glycosylation. The interval 115-206 is alpha-2; that stretch reads GSHTLQSMYG…ENGKETLQRA (92 aa). 2 disulfides stabilise this stretch: C125–C188 and C227–C283. An alpha-3 region spans residues 207–298; the sequence is EPPKTHVTHH…GLPEPLTLRW (92 aa). The Ig-like C1-type domain maps to 209–297; the sequence is PKTHVTHHPL…EGLPEPLTLR (89 aa). A connecting peptide region spans residues 299–308; that stretch reads EPSSQPTIPI. The helical transmembrane segment at 309–332 threads the bilayer; it reads VGIVVGLAVLVVLAVLGAVVTAMM. Topologically, residues 333–366 are cytoplasmic; it reads CRRKSSGGKGGSCSQAACSNSAQGSDESLITCKA.

Belongs to the MHC class I family. Heterodimer of an alpha chain and a beta chain (beta-2-microglobulin).

It is found in the membrane. Its function is as follows. Involved in the presentation of foreign antigens to the immune system. This Gorilla gorilla gorilla (Western lowland gorilla) protein is Class I histocompatibility antigen, Gogo-C*0203 alpha chain.